We begin with the raw amino-acid sequence, 366 residues long: Cell division protein FtsY homolog, chloroplastic (366 aa).

Residues 1-40 (MATSSAHLSFLAGRISPFSSERIGLFPLRGEFRPRMTRFR) constitute a chloroplast transit peptide. GTP is bound by residues 171-178 (GVNGGGKT), 254-258 (DTSGR), and 318-321 (TKLD).

Belongs to the GTP-binding SRP family. Monomer. Interacts with FFC/cpSRP54, a component of the cpSRP complex, composed of a FFC/cpSRP54 monomer and a CAO/cpSRP43 dimer. The complex with FFC/cpSRP54 is formed when both proteins are bound with GTP. In terms of tissue distribution, expressed in green tissues. Low levels in roots and seeds.

The protein resides in the plastid. The protein localises to the chloroplast stroma. It is found in the chloroplast thylakoid membrane. Signal recognition particle receptor protein. Binds GTP specifically. The GTPase activity is inhibited by the N-terminus of the protein until binding to the thylakoid membrane. Activates the GTPase activity of FFC/cpSRP54 when bound to the cpSRP complex. Required for light-harvesting chlorophyll a/b-binding protein (LHCP) integration into thylakoids. Might be also functionally linked to the Sec translocation machinery. This is Cell division protein FtsY homolog, chloroplastic (CPFTSY) from Arabidopsis thaliana (Mouse-ear cress).